The primary structure comprises 198 residues: MNLAEGVQYISFLILAFLVIGAALGVVLLSNIVYSAFLLGGVFLSISGIYILLNADFVAAAQVLVYVGAVSVLILFAIMLVNKREDFSKIPGRWLRNVSTALVCTGIFALLSTMVLITPWQINETGPFVENTLVTIGKHFFSDYLLPFELASVLLLMAMVGAIILARRDLIPELSEENKTATALTLPERPRELTSASK.

The next 5 helical transmembrane spans lie at 9-29, 32-52, 61-81, 100-120, and 145-165; these read YISF…VVLL, IVYS…IYIL, AQVL…IMLV, TALV…ITPW, and LLPF…AIIL.

The protein belongs to the complex I subunit 6 family.

Its subcellular location is the membrane. It carries out the reaction a plastoquinone + NADH + (n+1) H(+)(in) = a plastoquinol + NAD(+) + n H(+)(out). The catalysed reaction is a plastoquinone + NADPH + (n+1) H(+)(in) = a plastoquinol + NADP(+) + n H(+)(out). NDH-1 shuttles electrons from NAD(P)H, via FMN and iron-sulfur (Fe-S) centers, to quinones in the respiratory chain. The immediate electron acceptor for the enzyme in this species is believed to be plastoquinone. Couples the redox reaction to proton translocation (for every two electrons transferred, four hydrogen ions are translocated across the cytoplasmic membrane), and thus conserves the redox energy in a proton gradient. This Synechocystis sp. (strain ATCC 27184 / PCC 6803 / Kazusa) protein is NAD(P)H-quinone oxidoreductase chain 6 (ndhG).